The sequence spans 184 residues: Probable chorismate pyruvate-lyase 1 (184 aa).

Residues Arg-70, Leu-108, and Glu-166 each contribute to the substrate site.

The protein belongs to the UbiC family.

It is found in the cytoplasm. It carries out the reaction chorismate = 4-hydroxybenzoate + pyruvate. It participates in cofactor biosynthesis; ubiquinone biosynthesis. Functionally, removes the pyruvyl group from chorismate, with concomitant aromatization of the ring, to provide 4-hydroxybenzoate (4HB) for the ubiquinone pathway. The chain is Probable chorismate pyruvate-lyase 1 from Burkholderia pseudomallei (strain 1710b).